A 206-amino-acid polypeptide reads, in one-letter code: dTTP/UTP pyrophosphatase (206 aa).

Asp79 serves as the catalytic Proton acceptor.

This sequence belongs to the Maf family. YhdE subfamily. It depends on a divalent metal cation as a cofactor.

The protein localises to the cytoplasm. The enzyme catalyses dTTP + H2O = dTMP + diphosphate + H(+). It carries out the reaction UTP + H2O = UMP + diphosphate + H(+). Functionally, nucleoside triphosphate pyrophosphatase that hydrolyzes dTTP and UTP. May have a dual role in cell division arrest and in preventing the incorporation of modified nucleotides into cellular nucleic acids. The sequence is that of dTTP/UTP pyrophosphatase from Rhizobium meliloti (strain 1021) (Ensifer meliloti).